We begin with the raw amino-acid sequence, 815 residues long: Patatin-like phospholipase domain-containing protein LELG_00944 (815 aa).

Over residues 41 to 50 (VSTTAPTTPL) the composition is skewed to polar residues. Disordered regions lie at residues 41-105 (VSTT…PQLK) and 140-166 (SENL…STSP). Residues 54–73 (LDMGDLSLLGGELGNGSDDV) show a composition bias toward low complexity. Positions 74 to 94 (VVGDDDDDDDDDDDDDDDDDD) are enriched in acidic residues. Residues 148-160 (KRTKFAKSSKSSK) are compositionally biased toward basic residues. A helical membrane pass occupies residues 185 to 205 (WPILTFVVIWVTILGFLYLAV). The 193-residue stretch at 360-552 (LCLSGGACFA…RTDIPIDALN (193 aa)) folds into the PNPLA domain. A GXSXG motif is present at residues 391 to 395 (GTSGG). Ser393 serves as the catalytic Nucleophile. The Proton acceptor role is filled by Asp539. Positions 753–815 (GSTLRDDDAD…LTKERRHTVY (63 aa)) are disordered. Acidic residues predominate over residues 759–799 (DDADADVDEDDNEDEDEEDEDENDYEEYDVEDLDDPYESDA).

It belongs to the PLPL family.

The protein localises to the membrane. In terms of biological role, probable lipid hydrolase. The protein is Patatin-like phospholipase domain-containing protein LELG_00944 of Lodderomyces elongisporus (strain ATCC 11503 / CBS 2605 / JCM 1781 / NBRC 1676 / NRRL YB-4239) (Yeast).